The primary structure comprises 461 residues: Photosystem II CP43 reaction center protein (461 aa).

Positions 1-2 (ME) are excised as a propeptide. Threonine 3 is modified (N-acetylthreonine). Threonine 3 is modified (phosphothreonine). The next 5 helical transmembrane spans lie at 57–81 (LFEVSHFVPEKPMYEQGLILLPHIA), 122–143 (LIGPETLEESYPFFGYVWKDKN), 166–188 (KAMYFGGVYDTWAPGGGDVRVIT), 243–263 (TPWPWARRAFVWSGEAYLSYS), and 279–300 (WFNNTAYPSEFYGPTGPEASQS). Glutamate 355 serves as a coordination point for [CaMn4O5] cluster. The chain crosses the membrane as a helical span at residues 435 to 459 (RARAAAAGFEKGIDRFDEPVLSMRP).

The protein belongs to the PsbB/PsbC family. PsbC subfamily. In terms of assembly, PSII is composed of 1 copy each of membrane proteins PsbA, PsbB, PsbC, PsbD, PsbE, PsbF, PsbH, PsbI, PsbJ, PsbK, PsbL, PsbM, PsbT, PsbX, PsbY, PsbZ, Psb30/Ycf12, at least 3 peripheral proteins of the oxygen-evolving complex and a large number of cofactors. It forms dimeric complexes. Binds multiple chlorophylls and provides some of the ligands for the Ca-4Mn-5O cluster of the oxygen-evolving complex. It may also provide a ligand for a Cl- that is required for oxygen evolution. PSII binds additional chlorophylls, carotenoids and specific lipids. is required as a cofactor. Phosphorylated in vitro.

It is found in the plastid. The protein localises to the chloroplast thylakoid membrane. Its function is as follows. One of the components of the core complex of photosystem II (PSII). It binds chlorophyll and helps catalyze the primary light-induced photochemical processes of PSII. PSII is a light-driven water:plastoquinone oxidoreductase, using light energy to abstract electrons from H(2)O, generating O(2) and a proton gradient subsequently used for ATP formation. This is Photosystem II CP43 reaction center protein from Chlamydomonas reinhardtii (Chlamydomonas smithii).